Reading from the N-terminus, the 780-residue chain is Chloride channel protein CLC-b (780 aa).

The tract at residues 1 to 28 (MVEEDLNQIGGNSNYNGEGGDPESNTLN) is disordered. Transmembrane regions (helical) follow at residues 87–107 (TLAC…NLAV), 130–150 (GLMV…VLCV), 177–197 (FGAT…AAGL), 205–225 (LVHI…DNHR), 247–267 (GSAA…LFAL), 277–297 (ALLW…REFI), 327–347 (VTDI…GSLY), 370–390 (VLLS…LPFL), 452–472 (MGSL…TFGI), 477–497 (GLFL…GAAM), 509–529 (AVLG…SLCV), and 530–550 (IFLE…VLLI). CBS domains are found at residues 594 to 663 (AKPP…FLTE) and 708 to 770 (TNTT…AFPL). Residues 735 to 755 (HLLIVPKIQASGMCPVVGILT) form a helical membrane-spanning segment.

Belongs to the chloride channel (TC 2.A.49) family. As to quaternary structure, homodimer. Interacts with PP2A5. In terms of tissue distribution, broadly expressed in the plant.

The protein localises to the membrane. Functionally, voltage-gated chloride channel. In Arabidopsis thaliana (Mouse-ear cress), this protein is Chloride channel protein CLC-b (CLC-B).